The primary structure comprises 487 residues: Selenium-binding protein 2 (487 aa).

Residue Ala-2 is modified to N-acetylalanine. Cys-19 and Cys-20 together coordinate selenite.

This sequence belongs to the selenium-binding protein family. In terms of tissue distribution, mostly expressed in seedlings, leaves and stems, and, to a lower extent, in flowers and roots.

In terms of biological role, required for the fusion of female gametophyte polar nuclei. This chain is Selenium-binding protein 2 (SBP2), found in Arabidopsis thaliana (Mouse-ear cress).